The following is a 372-amino-acid chain: B2 bradykinin receptor (372 aa).

The Extracellular segment spans residues 1 to 34 (MFNITSQVSALNATLAQGNSCLDAEWWSWLNTIQ). N-linked (GlcNAc...) asparagine glycosylation is found at N3 and N12. A helical membrane pass occupies residues 35 to 58 (APFLWVLFVLAVLENIFVLSVFFL). Residues 59-67 (HKSSCTVAE) lie on the Cytoplasmic side of the membrane. The helical transmembrane segment at 68-92 (IYLGNLAVADLILAFGLPFWAITIA) threads the bilayer. Residues 93–105 (NNFDWLFGEVLCR) are Extracellular-facing. A disulfide bridge links C104 with C185. A helical membrane pass occupies residues 106–127 (MVNTMIQMNMYSSICFLMLVSI). Residues 128-149 (DRYLALVKTMSMGRMRGVRWAK) lie on the Cytoplasmic side of the membrane. Residue Y130 is modified to Phosphotyrosine. The chain crosses the membrane as a helical span at residues 150 to 172 (LYSLVIWGCALLLSSPMLVFRTM). At 173-195 (KDYRDEGHNVTACLIIYPSLTWQ) the chain is on the extracellular side. N-linked (GlcNAc...) asparagine glycosylation is present at N181. A helical transmembrane segment spans residues 196 to 222 (VFTNVLLNLVGFLLPLSIITFCTVQIM). The Cytoplasmic segment spans residues 223-241 (QVLRNNEMQKFKEIQTERR). A helical membrane pass occupies residues 242 to 266 (ATVLVLAVLLLFVVCWLPFQIGTFL). The Extracellular portion of the chain corresponds to 267–284 (DTLRLLGFLPGCWEHVID). The chain crosses the membrane as a helical span at residues 285-308 (LITQISSYLAYSNSCLNPLVYVIV). Topologically, residues 309–364 (GKRFRKKSREVYHGLCRSGGCVSEPAQSENSMGTLRTSISVDRQIHKLQDWARSSS) are cytoplasmic. Position 320 is a phosphotyrosine (Y320). C324 carries the S-palmitoyl cysteine lipid modification. The residue at position 339 (S339) is a Phosphoserine. Phosphothreonine is present on T342. A phosphoserine; by GRK6 mark is found at S346 and S348.

It belongs to the G-protein coupled receptor 1 family. Bradykinin receptor subfamily. BDKRB2 sub-subfamily. Forms a complex with PECAM1 and GNAQ. Interacts with PECAM1.

It is found in the cell membrane. Functionally, receptor for bradykinin. It is associated with G proteins that activate a phosphatidylinositol-calcium second messenger system. This Cavia porcellus (Guinea pig) protein is B2 bradykinin receptor (BDKRB2).